A 333-amino-acid polypeptide reads, in one-letter code: DNA-directed RNA polymerase subunit alpha (333 aa).

The segment at 1 to 246 is alpha N-terminal domain (alpha-NTD); sequence MKKMVQIKYK…AHLQVIGDVK (246 aa). The tract at residues 262-333 is alpha C-terminal domain (alpha-CTD); the sequence is VEPSIHSVDI…YNVTLNRGEK (72 aa).

This sequence belongs to the RNA polymerase alpha chain family. As to quaternary structure, homodimer. The RNAP catalytic core consists of 2 alpha, 1 beta, 1 beta' and 1 omega subunit. When a sigma factor is associated with the core the holoenzyme is formed, which can initiate transcription.

It catalyses the reaction RNA(n) + a ribonucleoside 5'-triphosphate = RNA(n+1) + diphosphate. Its function is as follows. DNA-dependent RNA polymerase catalyzes the transcription of DNA into RNA using the four ribonucleoside triphosphates as substrates. The chain is DNA-directed RNA polymerase subunit alpha from Mycoplasmopsis pulmonis (strain UAB CTIP) (Mycoplasma pulmonis).